A 77-amino-acid chain; its full sequence is Putative Fis-like DNA-binding protein (77 aa).

Positions 53–72 form a DNA-binding region, H-T-H motif; it reads QSLAADYLGINRNTLRKKLQ.

This sequence belongs to the transcriptional regulatory Fis family.

The protein is Putative Fis-like DNA-binding protein of Ralstonia nicotianae (strain ATCC BAA-1114 / GMI1000) (Ralstonia solanacearum).